Consider the following 364-residue polypeptide: Methylthioribose-1-phosphate isomerase (364 aa).

Residues 46 to 48 (RGA), R89, and Q196 each bind substrate. Catalysis depends on D237, which acts as the Proton donor. Residue 247-248 (NK) participates in substrate binding.

Belongs to the eIF-2B alpha/beta/delta subunits family. MtnA subfamily.

The enzyme catalyses 5-(methylsulfanyl)-alpha-D-ribose 1-phosphate = 5-(methylsulfanyl)-D-ribulose 1-phosphate. The protein operates within amino-acid biosynthesis; L-methionine biosynthesis via salvage pathway; L-methionine from S-methyl-5-thio-alpha-D-ribose 1-phosphate: step 1/6. Catalyzes the interconversion of methylthioribose-1-phosphate (MTR-1-P) into methylthioribulose-1-phosphate (MTRu-1-P). The polypeptide is Methylthioribose-1-phosphate isomerase (Pelotomaculum thermopropionicum (strain DSM 13744 / JCM 10971 / SI)).